Consider the following 387-residue polypeptide: Chorismate synthase (387 aa).

Arg39 and Arg45 together coordinate NADP(+). Residues Arg130–Ser132, Asn251–Ala252, Gly295, Lys310–Thr314, and Arg336 contribute to the FMN site.

Belongs to the chorismate synthase family. Homotetramer. It depends on FMNH2 as a cofactor.

It catalyses the reaction 5-O-(1-carboxyvinyl)-3-phosphoshikimate = chorismate + phosphate. The protein operates within metabolic intermediate biosynthesis; chorismate biosynthesis; chorismate from D-erythrose 4-phosphate and phosphoenolpyruvate: step 7/7. Functionally, catalyzes the anti-1,4-elimination of the C-3 phosphate and the C-6 proR hydrogen from 5-enolpyruvylshikimate-3-phosphate (EPSP) to yield chorismate, which is the branch point compound that serves as the starting substrate for the three terminal pathways of aromatic amino acid biosynthesis. This reaction introduces a second double bond into the aromatic ring system. The chain is Chorismate synthase from Exiguobacterium sp. (strain ATCC BAA-1283 / AT1b).